A 4687-amino-acid chain; its full sequence is Plectin (4687 aa).

The interval 1-1473 is globular 1; it reads MVAGMLMPLD…SELTTLTSQY (1473 aa). Arg-21 is subject to Phosphoserine. At Val-26 the chain carries Phosphotyrosine. Positions 111–158 are disordered; that stretch reads RRRSPHVQTMQGPLGCPPKRGPLPAEDPAREERQVYRRKEREEGAPET. The segment covering 137–154 has biased composition (basic and acidic residues); that stretch reads DPAREERQVYRRKEREEG. The interval 181–406 is actin-binding; that stretch reads DERDRVQKKT…YVSSLYDAMP (226 aa). Calponin-homology (CH) domains are found at residues 185–288 and 301–406; these read RVQK…LHFK and MTAK…DAMP. One copy of the Spectrin 1 repeat lies at 648–722; it reads LQSTQRRPEL…ERARNDESQL (75 aa). Ser-723 carries the phosphoserine modification. 2 Spectrin repeats span residues 743–827 and 840–933; these read KLLN…REDH and LQTQ…AIVQ. Phosphothreonine is present on Thr-818. The region spanning 944–1001 is the SH3 domain; that stretch reads RGHVPLLAVCDYKQVEVTVHKGDQCQLVGPAQPFHWKVLSSSGSEAAVPSVCFLVPPP. Phosphoserine is present on Ser-1050. Residues 1318-1418 form a Spectrin 4 repeat; it reads RERVTQLLER…QKFAKQYINA (101 aa). At Ser-1438 the chain carries Phosphoserine. Coiled-coil stretches lie at residues 1472 to 1692 and 1724 to 2760; these read QYIK…ERWL and SFAE…TSQA. Residues 1474–2758 form a central fibrous rod domain region; it reads IKFISETLRR…LAHSEEIATS (1285 aa). Residues 1623-1647 are disordered; that stretch reads EEAEAQKRQAQEEAERLRRQVQDES. Ser-1724 carries the phosphoserine modification. N6-acetyllysine is present on Lys-1728. 5 disordered regions span residues 1741–1764, 1796–1846, 2096–2139, 2164–2188, and 2218–2307; these read VTVT…ERAR, SLAQ…GTAQ, EDTM…AEEE, LRER…KRLQ, and RLRS…DAEM. 3 stretches are compositionally biased toward basic and acidic residues: residues 1801 to 1839, 2096 to 2111, and 2119 to 2131; these read DAEK…KQRQ, EDTM…EAAR, and EEQR…ERVQ. Low complexity predominate over residues 2173–2182; it reads ARQLQLAQEA. Residues 2218 to 2261 are compositionally biased toward basic and acidic residues; that stretch reads RLRSEAEAARRAAEEAEEAREQAEREAAQSRKQVEEAERLKQSA. The span at 2262-2275 shows a compositional bias: low complexity; it reads EEQAQAQAQAQAAA. The span at 2276-2291 shows a compositional bias: basic and acidic residues; that stretch reads EKLRKEAEQEAARRAQ. Position 2634 is a phosphoserine (Ser-2634). N6-acetyllysine is present on Lys-2639. Residues 2671 to 2710 are disordered; sequence QEEQQRQQQQMEQEKQELVASMEEARRRQREAEEGVRRKQ. Basic and acidic residues predominate over residues 2682–2710; the sequence is EQEKQELVASMEEARRRQREAEEGVRRKQ. Residues 2759 to 4687 form a globular 2 region; that stretch reads QAAATKALPN…SLGGPESAVA (1929 aa). Ser-2777 bears the Phosphoserine mark. Position 2784 is a phosphotyrosine (Tyr-2784). Plectin repeat units follow at residues 2791–2828, 2829–2866, 2867–2904, 2905–2942, 2943–2980, and 2984–3018; these read QKVP…REDV, RHYL…PGTA, LILL…PELH, HKLL…RDHG, IRLL…EEMN, and ADPS…PETG. At Ser-2805 the chain carries Phosphoserine. Thr-2889 is modified (phosphothreonine). At Tyr-3036 the chain carries Phosphotyrosine. 2 positions are modified to N6-acetyllysine: Lys-3056 and Lys-3094. 6 Plectin repeats span residues 3119–3156, 3157–3194, 3195–3232, 3233–3270, 3271–3308, and 3311–3346; these read ALVP…ADEV, RQAL…PEVA, VALL…PEMH, EKLL…REQG, LRLL…KETN, and LTSP…QLTG. A Phosphotyrosine modification is found at Tyr-3365. Lys-3423 is modified (N6-acetyllysine). Plectin repeat units follow at residues 3488–3525, 3526–3563, 3564–3601, 3602–3639, and 3643–3677; these read RTLL…ASTA, TLLL…PELH, EKLL…RDHA, IRLL…EEMN, and ADPS…PETG. Position 3583 is a phosphoserine (Ser-3583). Thr-3788 is modified (phosphothreonine). Position 3793 is a phosphotyrosine (Tyr-3793). Plectin repeat units lie at residues 3823-3860, 3861-3898, 3899-3936, 3937-3974, and 3978-4011; these read WRYL…AEVA, RLLL…PELH, DRLL…AEEA, LRLL…KDTH, and SEPS…DNSG. Thr-4033 carries the post-translational modification Phosphothreonine. At Ser-4057 the chain carries Phosphoserine. Plectin repeat units lie at residues 4066–4103, 4104–4141, 4142–4179, 4180–4217, 4221–4255, and 4268–4308; these read QKFL…PGTA, FELL…PEFK, DKLL…KDHG, IRLL…EEMN, TDPS…PQTG, and RKTS…HQTY. Positions 4253 to 4303 are binding to intermediate filaments; sequence QTGLCLLPLKEKKRERKTSSKSSVRKRRVVIVDPETGKEMSVYEAYRKGLI. A phosphoserine mark is found at Ser-4385, Ser-4387, Ser-4388, Ser-4389, Ser-4392, Ser-4393, Ser-4394, and Ser-4395. The residue at position 4396 (Tyr-4396) is a Phosphotyrosine. 2 positions are modified to phosphoserine: Ser-4399 and Ser-4409. Plectin repeat units follow at residues 4411 to 4448, 4449 to 4486, 4487 to 4524, 4525 to 4562, and 4563 to 4600; these read SDPT…NITG, QRLL…KIMV, DRIN…YEAG, QRFL…ARTA, and QKLR…EGTG. The residue at position 4414 (Thr-4414) is a Phosphothreonine. A Phosphothreonine; by CDK1 modification is found at Thr-4542. Residues Ser-4610 and Ser-4616 each carry the phosphoserine modification. Residues 4614 to 4674 are compositionally biased toward low complexity; sequence YYSPYSVSGS…SGYGRRYASG (61 aa). Positions 4614–4687 are disordered; sequence YYSPYSVSGS…SLGGPESAVA (74 aa). The residue at position 4618 (Tyr-4618) is a Phosphotyrosine. Residues Ser-4619, Ser-4621, and Ser-4625 each carry the phosphoserine modification. Thr-4626 is subject to Phosphothreonine. The interval 4628–4643 is 4 X 4 AA tandem repeats of G-S-R-X; it reads GSRTGSRTGSRAGSRR. Residue Ser-4629 is modified to Phosphoserine. 2 positions are modified to omega-N-methylarginine: Arg-4630 and Arg-4643. A phosphoserine mark is found at Ser-4645 and Ser-4678.

The protein belongs to the plakin or cytolinker family. As to quaternary structure, homodimer or homotetramer. Interacts (via actin-binding domain) with SYNE3. Interacts (via calponin-homology (CH) 1 domain) with VIM (via rod region). Interacts (via N-terminus) with DST isoform 2 (via N-terminus). Interacts with FER. Interacts with TOR1A. Interacts with ANK3. Identified in complexes that contain VIM, EZR, AHNAK, BFSP1, BFSP2, ANK2, PLEC, PRX and spectrin. Phosphorylated by CDK1; regulates dissociation from intermediate filaments during mitosis. Isoform 2 is phosphorylated on Ser-21 and Tyr-26. As to expression, widely expressed with highest expression in skeletal muscle and lowest in thymus.

It is found in the cytoplasm. The protein resides in the cytoskeleton. Its subcellular location is the cell junction. It localises to the hemidesmosome. The protein localises to the cell projection. It is found in the podosome. Its function is as follows. Interlinks intermediate filaments with microtubules and microfilaments and anchors intermediate filaments to desmosomes or hemidesmosomes. May be involved not only in the cross-linking and stabilization of cytoskeletal intermediate filaments network, but also in the regulation of their dynamics. This Rattus norvegicus (Rat) protein is Plectin (Plec).